Consider the following 92-residue polypeptide: Large ribosomal subunit protein eL37 (92 aa).

Positions 19, 22, 34, and 37 each coordinate Zn(2+). The C4-type zinc-finger motif lies at 19 to 37 (CRRCGRSSYHIQKSKCAQC).

This sequence belongs to the eukaryotic ribosomal protein eL37 family. The cofactor is Zn(2+).

In terms of biological role, binds to the 23S rRNA. The protein is Large ribosomal subunit protein eL37 (RpL37) of Spodoptera frugiperda (Fall armyworm).